We begin with the raw amino-acid sequence, 226 residues long: UPF0173 metal-dependent hydrolase Tpet_1587 (226 aa).

It belongs to the UPF0173 family.

The chain is UPF0173 metal-dependent hydrolase Tpet_1587 from Thermotoga petrophila (strain ATCC BAA-488 / DSM 13995 / JCM 10881 / RKU-1).